The chain runs to 562 residues: Arf-GAP domain and FG repeat-containing protein 1 (562 aa).

The Arf-GAP domain occupies 11–135 (EKHLKMLRDM…WYVPPEQAKV (125 aa)). A C4-type zinc finger spans residues 29–52 (CFDCDQRGPTYVNMTVGSFVCTSC). The interval 145–193 (GSSASSTSSTPEVKPLKSLLGDSAPTLHLNKGTPSQSPVVGRSQGQQQE) is disordered. Ser-167 is modified (phosphoserine). Over residues 176 to 191 (GTPSQSPVVGRSQGQQ) the composition is skewed to polar residues. Thr-177 is subject to Phosphothreonine. Ser-181 and Ser-362 each carry phosphoserine. O-linked (GlcNAc) serine glycosylation is present at Ser-367.

Interacts with EPS15R and EPS15. Interacts with FCHO1. Post-translationally, O-glycosylated. As to expression, ubiquitously expressed.

The protein resides in the nucleus. Its subcellular location is the cytoplasmic vesicle. Its function is as follows. Required for vesicle docking or fusion during acrosome biogenesis. May play a role in RNA trafficking or localization. In case of infection by HIV-1, acts as a cofactor for viral Rev and promotes movement of Rev-responsive element-containing RNAs from the nuclear periphery to the cytoplasm. This step is essential for HIV-1 replication. This chain is Arf-GAP domain and FG repeat-containing protein 1 (AGFG1), found in Homo sapiens (Human).